The following is a 232-amino-acid chain: 7-cyano-7-deazaguanine synthase (232 aa).

ATP is bound at residue 13 to 23; that stretch reads LSGGLDSATVL. C194, C204, C207, and C210 together coordinate Zn(2+).

Belongs to the QueC family. Zn(2+) is required as a cofactor.

The enzyme catalyses 7-carboxy-7-deazaguanine + NH4(+) + ATP = 7-cyano-7-deazaguanine + ADP + phosphate + H2O + H(+). The protein operates within purine metabolism; 7-cyano-7-deazaguanine biosynthesis. Catalyzes the ATP-dependent conversion of 7-carboxy-7-deazaguanine (CDG) to 7-cyano-7-deazaguanine (preQ(0)). The polypeptide is 7-cyano-7-deazaguanine synthase (Hydrogenovibrio crunogenus (strain DSM 25203 / XCL-2) (Thiomicrospira crunogena)).